The following is a 430-amino-acid chain: Glutamate-1-semialdehyde 2,1-aminomutase 2 (430 aa).

Lys-269 carries the N6-(pyridoxal phosphate)lysine modification.

Belongs to the class-III pyridoxal-phosphate-dependent aminotransferase family. HemL subfamily. Homodimer. Pyridoxal 5'-phosphate serves as cofactor.

It is found in the cytoplasm. It carries out the reaction (S)-4-amino-5-oxopentanoate = 5-aminolevulinate. It functions in the pathway porphyrin-containing compound metabolism; protoporphyrin-IX biosynthesis; 5-aminolevulinate from L-glutamyl-tRNA(Glu): step 2/2. This chain is Glutamate-1-semialdehyde 2,1-aminomutase 2, found in Bacillus pumilus (strain SAFR-032).